Here is a 471-residue protein sequence, read N- to C-terminus: uncharacterized protein (471 aa).

The interval 13 to 57 (KGGATIGATPMESDSSVSALSGSSASKVSRRGRRRSHLASKSSAP) is disordered. A compositionally biased stretch (low complexity) spans 27–39 (SSVSALSGSSASK). Residues 40–50 (VSRRGRRRSHL) are compositionally biased toward basic residues. 2 CCHC-type zinc fingers span residues 397 to 414 (YACHRCVGFDHKVSECRQ) and 417 to 434 (SVCRQCGQQGHTAAKCQN). The segment at 438-457 (CRNCRHRGQPSGHYMLSNAC) is gag-like cysteine motif.

This sequence to corresponding ORF of B.mori (R1BM).

This is an uncharacterized protein from Drosophila melanogaster (Fruit fly).